The following is a 159-amino-acid chain: Succinate dehydrogenase [ubiquinone] cytochrome b small subunit, mitochondrial (159 aa).

The N-terminal 56 residues, Met-1 to His-56, are a transit peptide targeting the mitochondrion. Residues Ser-57–Ser-63 are Mitochondrial matrix-facing. The chain crosses the membrane as a helical span at residues Leu-64–Leu-85. The Mitochondrial intermembrane segment spans residues Asn-86–Ala-90. A helical transmembrane segment spans residues Met-91 to Val-111. Residue His-102 coordinates heme b. The Mitochondrial matrix portion of the chain corresponds to Thr-112–Ser-120. Tyr-114 contacts a ubiquinone. Residues Gln-121–Phe-142 form a helical membrane-spanning segment. The Mitochondrial intermembrane segment spans residues Asn-143–Leu-159.

The protein belongs to the CybS family. As to quaternary structure, component of complex II composed of four subunits: the flavoprotein (FP) SDHA, iron-sulfur protein (IP) SDHB, and a cytochrome b560 composed of SDHC and SDHD.

Its subcellular location is the mitochondrion inner membrane. Its pathway is carbohydrate metabolism; tricarboxylic acid cycle. Functionally, membrane-anchoring subunit of succinate dehydrogenase (SDH) that is involved in complex II of the mitochondrial electron transport chain and is responsible for transferring electrons from succinate to ubiquinone (coenzyme Q). SDH also oxidizes malate to the non-canonical enol form of oxaloacetate, enol-oxaloacetate. Enol-oxaloacetate, which is a potent inhibitor of the succinate dehydrogenase activity, is further isomerized into keto-oxaloacetate. The protein is Succinate dehydrogenase [ubiquinone] cytochrome b small subunit, mitochondrial (SDHD) of Pongo abelii (Sumatran orangutan).